The sequence spans 145 residues: Small ribosomal subunit protein eS19 (145 aa).

A disordered region spans residues 120–145 (GGRRISENGQRDLDRIAAQTLEEDDE). Residues 123–134 (RISENGQRDLDR) are compositionally biased toward basic and acidic residues.

This sequence belongs to the eukaryotic ribosomal protein eS19 family. Component of the small ribosomal subunit. Mature ribosomes consist of a small (40S) and a large (60S) subunit. The 40S subunit contains about 32 different proteins and 1 molecule of RNA (18S). The 60S subunit contains 45 different proteins and 3 molecules of RNA (25S, 5.8S and 5S).

The protein resides in the cytoplasm. Component of the ribosome, a large ribonucleoprotein complex responsible for the synthesis of proteins in the cell. The small ribosomal subunit (SSU) binds messenger RNAs (mRNAs) and translates the encoded message by selecting cognate aminoacyl-transfer RNA (tRNA) molecules. The large subunit (LSU) contains the ribosomal catalytic site termed the peptidyl transferase center (PTC), which catalyzes the formation of peptide bonds, thereby polymerizing the amino acids delivered by tRNAs into a polypeptide chain. The nascent polypeptides leave the ribosome through a tunnel in the LSU and interact with protein factors that function in enzymatic processing, targeting, and the membrane insertion of nascent chains at the exit of the ribosomal tunnel. RPS19A is required for proper maturation of the small (40S) ribosomal subunit. The protein is Small ribosomal subunit protein eS19 (RPS19A) of Candida albicans (strain SC5314 / ATCC MYA-2876) (Yeast).